We begin with the raw amino-acid sequence, 576 residues long: uncharacterized protein (576 aa).

Positions 1 to 28 (MLRLNGLRVLLRTLAAIGALLTTASASA) are cleaved as a signal peptide. Ser185 serves as the catalytic Acyl-ester intermediate. Disulfide bonds link Cys252–Cys269 and Cys278–Cys286. The Ca(2+) site is built by Asp253, Asp256, Asp260, and Val262. Residues Asp414 and His464 each act as charge relay system in the active site. Cys529 and Cys551 are disulfide-bonded.

This sequence belongs to the tannase family.

This is an uncharacterized protein from Xanthomonas campestris pv. campestris (strain ATCC 33913 / DSM 3586 / NCPPB 528 / LMG 568 / P 25).